A 156-amino-acid polypeptide reads, in one-letter code: RING finger protein 224 (156 aa).

The segment at 23–70 (CIICYSAYDLSVHLPRRLYCGHTFCQACMQRLDMPAHEQHWIPCPQCR) adopts an RING-type zinc-finger fold.

The chain is RING finger protein 224 (Rnf224) from Mus musculus (Mouse).